We begin with the raw amino-acid sequence, 162 residues long: Crossover junction endodeoxyribonuclease RuvC (162 aa).

Active-site residues include aspartate 7, glutamate 67, and aspartate 140. Aspartate 7, glutamate 67, and aspartate 140 together coordinate Mg(2+).

It belongs to the RuvC family. In terms of assembly, homodimer which binds Holliday junction (HJ) DNA. The HJ becomes 2-fold symmetrical on binding to RuvC with unstacked arms; it has a different conformation from HJ DNA in complex with RuvA. In the full resolvosome a probable DNA-RuvA(4)-RuvB(12)-RuvC(2) complex forms which resolves the HJ. Requires Mg(2+) as cofactor.

The protein localises to the cytoplasm. It carries out the reaction Endonucleolytic cleavage at a junction such as a reciprocal single-stranded crossover between two homologous DNA duplexes (Holliday junction).. Its function is as follows. The RuvA-RuvB-RuvC complex processes Holliday junction (HJ) DNA during genetic recombination and DNA repair. Endonuclease that resolves HJ intermediates. Cleaves cruciform DNA by making single-stranded nicks across the HJ at symmetrical positions within the homologous arms, yielding a 5'-phosphate and a 3'-hydroxyl group; requires a central core of homology in the junction. The consensus cleavage sequence is 5'-(A/T)TT(C/G)-3'. Cleavage occurs on the 3'-side of the TT dinucleotide at the point of strand exchange. HJ branch migration catalyzed by RuvA-RuvB allows RuvC to scan DNA until it finds its consensus sequence, where it cleaves and resolves the cruciform DNA. The polypeptide is Crossover junction endodeoxyribonuclease RuvC (Pseudothermotoga lettingae (strain ATCC BAA-301 / DSM 14385 / NBRC 107922 / TMO) (Thermotoga lettingae)).